The chain runs to 1682 residues: Collagen alpha-4(IV) chain (1682 aa).

Residues 1-32 (MRCFFRWTKSFVTAPWSLIFILFTIQYEYGSG) form the signal peptide. The interval 31 to 56 (SGKKYGGPCGGRNCSVCQCFPEKGSR) is 7S domain. N-linked (GlcNAc...) asparagine glycosylation is present at N43. 2 disordered regions span residues 56-255 (RGHP…VQPP) and 379-1453 (PGPP…FGPG). The tract at residues 57 to 1451 (GHPGPLGPQG…TGDPGPKGFG (1395 aa)) is triple-helical region. The Cell attachment site motif lies at 86–88 (RGD). The segment covering 103–116 (PTGVPGFPGVDGVP) has biased composition (low complexity). N-linked (GlcNAc...) asparagine glycosylation is present at N134. 2 short sequence motifs (cell attachment site) span residues 137-139 (RGD) and 181-183 (RGD). Positions 396-410 (MGPPGPPGVPGPPGF) are enriched in pro residues. The span at 411–426 (PGEAGVPGRLDCAPGK) shows a compositional bias: low complexity. Residues 487 to 500 (PPGPMGPPGPPGPP) are compositionally biased toward pro residues. A compositionally biased stretch (basic and acidic residues) spans 578 to 601 (DGGDGRPGERGDPGPRGDHKDAAP). Short sequence motifs (cell attachment site) lie at residues 587 to 589 (RGD) and 593 to 595 (RGD). A compositionally biased stretch (pro residues) spans 609–621 (LPGPPGRTGPEGP). Positions 632–647 (QRGLPGEPGRPGTRGF) are enriched in low complexity. N661 carries N-linked (GlcNAc...) asparagine glycosylation. Residues 665–682 (PGKPGLPGLDGPPGLKGF) show a composition bias toward low complexity. The Cell attachment site signature appears at 716 to 718 (RGD). Composition is skewed to low complexity over residues 742–758 (PGKD…AFGD) and 857–902 (PAGM…LPGL). 2 stretches are compositionally biased toward basic and acidic residues: residues 911–929 (ERGK…EVGE) and 938–950 (DLGE…DRGL). A compositionally biased stretch (gly residues) spans 969-978 (GPPGDGGFSG). Short sequence motifs (cell attachment site) lie at residues 980-982 (RGD) and 992-994 (RGD). Low complexity predominate over residues 998–1010 (DGLPGLHRGQPGI). Over residues 1011–1025 (DGPPGPPGPPGPPGS) the composition is skewed to pro residues. Over residues 1034–1044 (FPGFPGDQGDP) the composition is skewed to low complexity. The Cell attachment site signature appears at 1144-1146 (RGD). 5 stretches are compositionally biased toward pro residues: residues 1223–1235 (PGPP…PGPA), 1248–1272 (DPGP…PPGS), 1289–1304 (PGPP…PGCQ), 1340–1351 (PGPPGRKGPVGP), and 1435–1444 (APGPPGPTGD). One can recognise a Collagen IV NC1 domain in the interval 1457-1682 (GFLLVLHSQT…SRCQVCMKHS (226 aa)). Intrachain disulfides connect C1472–C1561, C1505–C1558, C1517–C1523, C1580–C1678, C1614–C1675, and C1626–C1633.

Belongs to the type IV collagen family. There are six type IV collagen isoforms, alpha 1(IV)-alpha 6(IV), each of which can form a triple helix structure with 2 other chains to generate type IV collagen network. The alpha 3(IV) chain forms a triple helical protomer with alpha 4(IV) and alpha 5(IV); this triple helical structure dimerizes through NC1-NC1 domain interactions such that the alpha 3(IV), alpha 4(IV) and alpha 5(IV) chains of one protomer connect with the alpha 5(IV), alpha 4(IV) and alpha 3(IV) chains of the opposite protomer, respectively. Associates with LAMB2 at the neuromuscular junction and in GBM. In terms of processing, prolines at the third position of the tripeptide repeating unit (G-X-Y) are hydroxylated in some or all of the chains. Post-translationally, type IV collagens contain numerous cysteine residues which are involved in inter- and intramolecular disulfide bonding. 12 of these, located in the NC1 domain, are conserved in all known type IV collagens. The trimeric structure of the NC1 domains is stabilized by covalent bonds between Lys and Met residues. Expressed in Bruch's membrane, outer plexiform layer, inner nuclear layer, inner plexiform layer, ganglion cell layer, inner limiting membrane and around the blood vessels of the retina (at protein level). Highly expressed in kidney and lung. Detected at lower levels in heart, muscle and skin.

Its subcellular location is the secreted. The protein localises to the extracellular space. The protein resides in the extracellular matrix. It is found in the basement membrane. Type IV collagen is the major structural component of glomerular basement membranes (GBM), forming a 'chicken-wire' meshwork together with laminins, proteoglycans and entactin/nidogen. In Mus musculus (Mouse), this protein is Collagen alpha-4(IV) chain.